The chain runs to 272 residues: Putative protein-disulfide oxidoreductase RP025 (272 aa).

An N-terminal signal peptide occupies residues 1 to 21 (MRNIFIVLIFLFLSNCSEVKA). The Thioredoxin domain maps to 74-263 (DSREQKKPEI…ISKAVDKALD (190 aa)). A disulfide bridge links Cys116 with Cys119.

The protein belongs to the thioredoxin family. DsbA subfamily.

It localises to the periplasm. Functionally, may be required for disulfide bond formation in some proteins. This chain is Putative protein-disulfide oxidoreductase RP025, found in Rickettsia prowazekii (strain Madrid E).